Here is a 617-residue protein sequence, read N- to C-terminus: DNA double-strand break repair protein Mre11 (617 aa).

4 residues coordinate Mn(2+): Asp-12, His-14, Asp-53, and Asn-88. Catalysis depends on His-89, which acts as the Proton donor. Mn(2+)-binding residues include His-158, Asp-189, and His-191. Residues 395 to 432 (SPVDPSSSVSSIESSGSVSPIDSVSTVSPSSPSSSAII) show a composition bias toward low complexity. Disordered regions lie at residues 395–437 (SPVD…EPEE) and 513–617 (VEDE…GDYL). Residues 529-547 (APQSSSPVSFSDNSQTGFS) are compositionally biased toward polar residues. Residues 549–559 (ISPPESIPSPE) are compositionally biased toward low complexity. Residues 560–583 (ILKENSEADADEKPVDGKLSEEKP) show a composition bias toward basic and acidic residues.

It belongs to the MRE11/RAD32 family. In terms of assembly, homodimer. Forms a heterotetramer composed of two Mre11 subunits and two Rad50 subunits. It depends on Mn(2+) as a cofactor.

With respect to regulation, nuclease activity is regulated by Rad50. Its function is as follows. Part of the Rad50/Mre11 complex, which is involved in the early steps of DNA double-strand break (DSB) repair. The complex may facilitate opening of the processed DNA ends to aid in the recruitment of HerA and NurA. Mre11 binds to DSB ends and has both double-stranded 3'-5' exonuclease activity and single-stranded endonuclease activity. This chain is DNA double-strand break repair protein Mre11, found in Methanosarcina mazei (strain ATCC BAA-159 / DSM 3647 / Goe1 / Go1 / JCM 11833 / OCM 88) (Methanosarcina frisia).